The following is a 130-amino-acid chain: Small ribosomal subunit protein uS8 (130 aa).

It belongs to the universal ribosomal protein uS8 family. In terms of assembly, part of the 30S ribosomal subunit. Contacts proteins S5 and S12.

Functionally, one of the primary rRNA binding proteins, it binds directly to 16S rRNA central domain where it helps coordinate assembly of the platform of the 30S subunit. This Vibrio vulnificus (strain CMCP6) protein is Small ribosomal subunit protein uS8.